A 231-amino-acid polypeptide reads, in one-letter code: MSALCPLLTPPASEALLLAQARQLSGYTLGELAAMAGITTPKDLKRDKGWIGVLLEIWLGASAGSKPEQDFAALGVELKTIPVDSLGRPLETTFVCVAPLTGNSGVTWETSHVRHKLKRVLWVPVEGDRSIPLAERRVGSPLLWSPSEEEDRQLRLDWEELMDMIVLGQVERITARHGEVLQLRPKAANARALTEAIGARGEPILTLPRGFYLKKNFTQALLARHFLLQNP.

The protein belongs to the MutH family.

Its subcellular location is the cytoplasm. Sequence-specific endonuclease that cleaves unmethylated GATC sequences. It is involved in DNA mismatch repair. This is DNA mismatch repair protein MutH from Salmonella enteritidis PT4 (strain P125109).